The sequence spans 719 residues: Protein ENHANCED DISEASE RESISTANCE 2-like (719 aa).

The 108-residue stretch at 3–110 folds into the PH domain; sequence KVVYEGWMVR…WKEKIECVID (108 aa). The tract at residues 134–173 is disordered; sequence AGRTASSSDHESPFSALEDENDSQRDLLRRTTIGNGPPES. The START domain maps to 180-392; the sequence is EFDAELSNQS…VSGLREWFSQ (213 aa). A disordered region spans residues 414-478; sequence ALGKGGKHHH…ETDAKKTEEP (65 aa). The segment covering 426–439 has biased composition (polar residues); it reads SLSIDQTNGASRNS. Acidic residues predominate over residues 442–461; it reads MDEDSDDDDEFQIPDSEPEP. The span at 462–477 shows a compositional bias: basic and acidic residues; that stretch reads ETSKQDQETDAKKTEE. Residues 665-685 form a helical membrane-spanning segment; that stretch reads GVLGLVIGVITSLVVEMAFLV.

Its subcellular location is the endoplasmic reticulum membrane. The protein resides in the cell membrane. It localises to the endosome membrane. Its function is as follows. Binds to phosphatidylinositol-4-phosphate (PtdIns(4)P). May regulate the salicylic acid- (SA-) mediated resistance to pathogens. This chain is Protein ENHANCED DISEASE RESISTANCE 2-like (EDR2L), found in Arabidopsis thaliana (Mouse-ear cress).